The following is a 321-amino-acid chain: PI-PLC X domain-containing protein 3 (321 aa).

Residues 22-197 form the PI-PLC X-box domain; that stretch reads SIHSIPLTNL…DYQVLVFYHS (176 aa). Catalysis depends on residues His37 and His114.

The chain is PI-PLC X domain-containing protein 3 (PLCXD3) from Bos taurus (Bovine).